The primary structure comprises 509 residues: Histone deacetylase 2 (509 aa).

Positions 24–338 (RRVCYFYDPE…WCYETGVALG (315 aa)) are histone deacetylase. Histidine 158 serves as the catalytic Proton donor/acceptor. Residues aspartate 193, histidine 195, and aspartate 281 each coordinate Zn(2+). The interval 394 to 509 (PSVQFEERIP…NAKNEPGSSL (116 aa)) is disordered. Basic and acidic residues-rich tracts occupy residues 398–409 (FEERIPETKLPE), 418–434 (DERH…DHKP), and 448–472 (VKRE…HKVP). A compositionally biased stretch (polar residues) spans 481-494 (SSKQVPTADANSMA).

The protein belongs to the histone deacetylase family. HD Type 1 subfamily. Zn(2+) is required as a cofactor. In terms of tissue distribution, expressed in roots.

Its subcellular location is the nucleus. It catalyses the reaction N(6)-acetyl-L-lysyl-[histone] + H2O = L-lysyl-[histone] + acetate. Responsible for the deacetylation of lysine residues on the N-terminal part of the core histones (H2A, H2B, H3 and H4). Histone deacetylation gives a tag for epigenetic repression and plays an important role in transcriptional regulation, cell cycle progression and developmental events. Histone deacetylases act via the formation of large multiprotein complexes. The polypeptide is Histone deacetylase 2 (Oryza sativa subsp. japonica (Rice)).